The following is a 209-amino-acid chain: Eukaryotic translation initiation factor 4E (209 aa).

MRNA contacts are provided by residues 51–52 (WH), 97–98 (WE), and 153–158 (RKQAYR).

The protein belongs to the eukaryotic initiation factor 4E family. EIF4F is a multi-subunit complex, the composition of which varies with external and internal environmental conditions. It is composed of at least eIF4A, eIF4E and eIF4G. eIF4E is also known to interact with other partners.

Its function is as follows. Recognizes and binds the 7-methylguanosine-containing mRNA cap during an early step in the initiation of protein synthesis and facilitates ribosome binding by inducing the unwinding of the mRNAs secondary structures. The polypeptide is Eukaryotic translation initiation factor 4E (TIF45) (Candida albicans (strain SC5314 / ATCC MYA-2876) (Yeast)).